A 37-amino-acid polypeptide reads, in one-letter code: Large ribosomal subunit protein bL36c (37 aa).

Belongs to the bacterial ribosomal protein bL36 family.

The protein localises to the plastid. It is found in the chloroplast. The polypeptide is Large ribosomal subunit protein bL36c (rpl36) (Porphyra purpurea (Red seaweed)).